We begin with the raw amino-acid sequence, 96 residues long: YcgL domain-containing protein VS_0884 (96 aa).

One can recognise a YcgL domain in the interval 1–84 (MLCSIYKSSK…PPVNELELHK (84 aa)).

In Vibrio atlanticus (strain LGP32) (Vibrio splendidus (strain Mel32)), this protein is YcgL domain-containing protein VS_0884.